Consider the following 113-residue polypeptide: Large ribosomal subunit protein bL17 (113 aa).

This sequence belongs to the bacterial ribosomal protein bL17 family. Part of the 50S ribosomal subunit. Contacts protein L32.

This is Large ribosomal subunit protein bL17 from Syntrophomonas wolfei subsp. wolfei (strain DSM 2245B / Goettingen).